The primary structure comprises 174 residues: Pituitary tumor-transforming gene 1 protein-interacting protein (174 aa).

The first 29 residues, 1–29 (MAPANLGLTPHWVMLLGAVLLLLLSGASA), serve as a signal peptide directing secretion. Over 30–93 (QEPPRVGCSE…RWGVCWVNFE (64 aa)) the chain is Extracellular. The PSI domain maps to 36-89 (GCSEYTNRSCEECLRNVSCLWCNENKACMDYPVRKILPPASLCKLSSARWGVCW). N-linked (GlcNAc...) asparagine glycosylation is found at N42 and N51. A helical membrane pass occupies residues 94-114 (ALIITMSVLGGSVLLGITVCC). At 115-174 (CYCCRRKKSRKPDKSDERAMREQEERRVRQEERRAEMKSRHDEIRKKYGLFKEQNPYEKF) the chain is on the cytoplasmic side. The interval 125 to 155 (KPDKSDERAMREQEERRVRQEERRAEMKSRH) is disordered. The span at 126-155 (PDKSDERAMREQEERRVRQEERRAEMKSRH) shows a compositional bias: basic and acidic residues. Residues 127–163 (DKSDERAMREQEERRVRQEERRAEMKSRHDEIRKKYG) adopt a coiled-coil conformation. A Phosphotyrosine modification is found at Y171.

Interacts with PTTG1.

It localises to the cell membrane. The protein localises to the cytoplasm. It is found in the nucleus. Functionally, may facilitate PTTG1 nuclear translocation. The chain is Pituitary tumor-transforming gene 1 protein-interacting protein (Pttg1ip) from Mus musculus (Mouse).